Reading from the N-terminus, the 351-residue chain is uncharacterized protein (351 aa).

An N-terminal signal peptide occupies residues 1-27; that stretch reads MKNKKRVLIASSLSCAILLLSAATTQA. Positions 28 to 71 are disordered; sequence NSAHKDSQDQNKKEHVDKSQQKDKRNVTNKDKNSTVPDDIGKNG. Residues 30–60 show a composition bias toward basic and acidic residues; that stretch reads AHKDSQDQNKKEHVDKSQQKDKRNVTNKDKN.

This sequence belongs to the aerolysin family.

This is an uncharacterized protein from Staphylococcus aureus (strain N315).